The chain runs to 296 residues: Ribosomal RNA small subunit methyltransferase A (296 aa).

Residues asparagine 30, leucine 32, glycine 57, glutamate 78, aspartate 103, and asparagine 128 each coordinate S-adenosyl-L-methionine.

This sequence belongs to the class I-like SAM-binding methyltransferase superfamily. rRNA adenine N(6)-methyltransferase family. RsmA subfamily.

It is found in the cytoplasm. The enzyme catalyses adenosine(1518)/adenosine(1519) in 16S rRNA + 4 S-adenosyl-L-methionine = N(6)-dimethyladenosine(1518)/N(6)-dimethyladenosine(1519) in 16S rRNA + 4 S-adenosyl-L-homocysteine + 4 H(+). Specifically dimethylates two adjacent adenosines (A1518 and A1519) in the loop of a conserved hairpin near the 3'-end of 16S rRNA in the 30S particle. May play a critical role in biogenesis of 30S subunits. The chain is Ribosomal RNA small subunit methyltransferase A from Macrococcus caseolyticus (strain JCSC5402) (Macrococcoides caseolyticum).